We begin with the raw amino-acid sequence, 103 residues long: Host transcription reprogramming factor 6 (103 aa).

The first 19 residues, 1–19, serve as a signal peptide directing secretion; sequence MRATTAFQVIAFLAVGAAA. Residues 66–92 form a C2H2-type zinc finger; the sequence is YWCPNQVCAKTFATQEERDHHIANTVH. Residues 82 to 103 form a disordered region; sequence ERDHHIANTVHPTNSKRDVLLQ.

It is found in the secreted. The protein localises to the host nucleus. Its function is as follows. Probable secreted effector that translocates into the nuclei of host cells to reprogram the expression of targeted genes by binding on effector binding elements in rice. This chain is Host transcription reprogramming factor 6, found in Pyricularia oryzae (strain 70-15 / ATCC MYA-4617 / FGSC 8958) (Rice blast fungus).